The chain runs to 137 residues: Large ribosomal subunit protein uL14 (137 aa).

The protein belongs to the universal ribosomal protein uL14 family. In terms of assembly, component of the large ribosomal subunit. Mature ribosomes consist of a small (40S) and a large (60S) subunit. The 40S subunit contains about 32 different proteins and 1 molecule of RNA (18S). The 60S subunit contains 45 different proteins and 3 molecules of RNA (25S, 5.8S and 5S).

Its subcellular location is the cytoplasm. Its function is as follows. Component of the ribosome, a large ribonucleoprotein complex responsible for the synthesis of proteins in the cell. The small ribosomal subunit (SSU) binds messenger RNAs (mRNAs) and translates the encoded message by selecting cognate aminoacyl-transfer RNA (tRNA) molecules. The large subunit (LSU) contains the ribosomal catalytic site termed the peptidyl transferase center (PTC), which catalyzes the formation of peptide bonds, thereby polymerizing the amino acids delivered by tRNAs into a polypeptide chain. The nascent polypeptides leave the ribosome through a tunnel in the LSU and interact with protein factors that function in enzymatic processing, targeting, and the membrane insertion of nascent chains at the exit of the ribosomal tunnel. The chain is Large ribosomal subunit protein uL14 from Candida albicans (strain SC5314 / ATCC MYA-2876) (Yeast).